Reading from the N-terminus, the 277-residue chain is uncharacterized protein (277 aa).

The SWIM-type zinc finger occupies 139-167 (TARELSLDCSCPDYAVPCKHLAATFYLLA).

This is an uncharacterized protein from Mycobacterium tuberculosis (strain ATCC 25618 / H37Rv).